Reading from the N-terminus, the 186-residue chain is Ribosome-recycling factor (186 aa).

The protein belongs to the RRF family.

Its subcellular location is the cytoplasm. In terms of biological role, responsible for the release of ribosomes from messenger RNA at the termination of protein biosynthesis. May increase the efficiency of translation by recycling ribosomes from one round of translation to another. This Cupriavidus metallidurans (strain ATCC 43123 / DSM 2839 / NBRC 102507 / CH34) (Ralstonia metallidurans) protein is Ribosome-recycling factor.